The chain runs to 142 residues: MYKTIIMPVDVFEMELSDKAVRHAEFLAQDDGVIHLLHVLPGSASLSLHRFAADVRRFEEHLQHEAEERLQTMVSHFTIDPSRIKQHVRFGSVRDEVNELAEELGADVVVIGSRNPSISTHLLGSNASSVIRHANLPVLVVR.

Belongs to the universal stress protein A family.

The protein is Universal stress protein G (uspG) of Escherichia coli O157:H7.